A 316-amino-acid chain; its full sequence is BTB/POZ domain-containing adapter for CUL3-mediated RhoA degradation protein 2 (316 aa).

Positions 28–96 (KYVQLNVGGS…LRDDTITLPQ (69 aa)) constitute a BTB domain. The span at 268-279 (EATSRSRSQASP) shows a compositional bias: polar residues. The interval 268–288 (EATSRSRSQASPSEDEDTFEL) is disordered. At Ser-278 the chain carries Phosphoserine. The residue at position 280 (Ser-280) is a Phosphoserine; by CK2.

The protein belongs to the BACURD family. As to quaternary structure, component of the BCR(TNFAIP1) E3 ubiquitin ligase complex, at least composed of CUL3, TNFAIP1/BACURD2 and RBX1. Interacts with RHOA; with a preference for RhoA-GDP. Interacts with RHOB. Interacts with PCNA. Interacts with CSNK2B. Phosphorylation at Ser-280 by CK2 facilitates the nucleus localization and increases interaction with PCNA.

Its subcellular location is the cytoplasm. It localises to the nucleus. It is found in the endosome. Its pathway is protein modification; protein ubiquitination. In terms of biological role, substrate-specific adapter of a BCR (BTB-CUL3-RBX1) E3 ubiquitin-protein ligase complex involved in regulation of cytoskeleton structure. The BCR(TNFAIP1) E3 ubiquitin ligase complex mediates the ubiquitination of RHOA, leading to its degradation by the proteasome, thereby regulating the actin cytoskeleton and cell migration. Its interaction with RHOB may regulate apoptosis. May enhance the PCNA-dependent DNA polymerase delta activity. The chain is BTB/POZ domain-containing adapter for CUL3-mediated RhoA degradation protein 2 (Tnfaip1) from Mus musculus (Mouse).